The following is a 184-amino-acid chain: Ribosome maturation factor RimM (184 aa).

A PRC barrel domain is found at 112–184 (TDSYYWIDLI…SNKTISLDWQ (73 aa)).

Belongs to the RimM family. As to quaternary structure, binds ribosomal protein uS19.

The protein localises to the cytoplasm. Functionally, an accessory protein needed during the final step in the assembly of 30S ribosomal subunit, possibly for assembly of the head region. Essential for efficient processing of 16S rRNA. May be needed both before and after RbfA during the maturation of 16S rRNA. It has affinity for free ribosomal 30S subunits but not for 70S ribosomes. The polypeptide is Ribosome maturation factor RimM (Polynucleobacter necessarius subsp. necessarius (strain STIR1)).